Here is a 234-residue protein sequence, read N- to C-terminus: 2-C-methyl-D-erythritol 4-phosphate cytidylyltransferase (234 aa).

The protein belongs to the IspD/TarI cytidylyltransferase family. IspD subfamily.

It carries out the reaction 2-C-methyl-D-erythritol 4-phosphate + CTP + H(+) = 4-CDP-2-C-methyl-D-erythritol + diphosphate. It functions in the pathway isoprenoid biosynthesis; isopentenyl diphosphate biosynthesis via DXP pathway; isopentenyl diphosphate from 1-deoxy-D-xylulose 5-phosphate: step 2/6. Functionally, catalyzes the formation of 4-diphosphocytidyl-2-C-methyl-D-erythritol from CTP and 2-C-methyl-D-erythritol 4-phosphate (MEP). In Pseudomonas aeruginosa (strain ATCC 15692 / DSM 22644 / CIP 104116 / JCM 14847 / LMG 12228 / 1C / PRS 101 / PAO1), this protein is 2-C-methyl-D-erythritol 4-phosphate cytidylyltransferase.